The following is a 555-amino-acid chain: Splicing factor U2af large subunit A (555 aa).

The disordered stretch occupies residues 1 to 165 (MRDYEGNGVD…ISGFDMAPPT (165 aa)). Basic and acidic residues-rich tracts occupy residues 23-81 (ISRD…EKDR) and 90-127 (RDRS…DRED). Over residues 143–155 (SKSRSRSPSKSKR) the composition is skewed to basic residues. RRM domains are found at residues 221–304 (RRVY…RPSD), 341–419 (DRIF…RANQ), and 460–546 (EVVT…YPEN).

This sequence belongs to the splicing factor SR family. As to expression, expressed in stems, leaves and apical buds.

It localises to the nucleus. Necessary for the splicing of pre-mRNA. Binds to the U -enriched regions of plant introns. The chain is Splicing factor U2af large subunit A (U2AF65A) from Nicotiana plumbaginifolia (Leadwort-leaved tobacco).